A 419-amino-acid polypeptide reads, in one-letter code: UDP-N-acetylglucosamine 1-carboxyvinyltransferase 2 (419 aa).

22 to 23 (KN) contributes to the phosphoenolpyruvate binding site. Arg92 provides a ligand contact to UDP-N-acetyl-alpha-D-glucosamine. Cys116 acts as the Proton donor in catalysis. A 2-(S-cysteinyl)pyruvic acid O-phosphothioketal modification is found at Cys116. Residues 121–125 (RPIDL), Asp306, and Ile328 contribute to the UDP-N-acetyl-alpha-D-glucosamine site.

Belongs to the EPSP synthase family. MurA subfamily.

The protein localises to the cytoplasm. It catalyses the reaction phosphoenolpyruvate + UDP-N-acetyl-alpha-D-glucosamine = UDP-N-acetyl-3-O-(1-carboxyvinyl)-alpha-D-glucosamine + phosphate. Its pathway is cell wall biogenesis; peptidoglycan biosynthesis. Functionally, cell wall formation. Adds enolpyruvyl to UDP-N-acetylglucosamine. The protein is UDP-N-acetylglucosamine 1-carboxyvinyltransferase 2 of Streptococcus pyogenes serotype M18 (strain MGAS8232).